Reading from the N-terminus, the 422-residue chain is Tyrosine--tRNA ligase (422 aa).

Residue tyrosine 37 participates in L-tyrosine binding. The short motif at 42–51 (PTEESLHIGH) is the 'HIGH' region element. Positions 175 and 179 each coordinate L-tyrosine. Positions 235–239 (KFGKT) match the 'KMSKS' region motif. Lysine 238 provides a ligand contact to ATP. Positions 357-414 (KDLQEALVLTSLAQSRTQAKNMIISNSISINTEKIRKNHIFHEKDKLFGKFTLLSRGK) constitute an S4 RNA-binding domain.

Belongs to the class-I aminoacyl-tRNA synthetase family. TyrS type 1 subfamily. Homodimer.

The protein localises to the cytoplasm. It catalyses the reaction tRNA(Tyr) + L-tyrosine + ATP = L-tyrosyl-tRNA(Tyr) + AMP + diphosphate + H(+). Its function is as follows. Catalyzes the attachment of tyrosine to tRNA(Tyr) in a two-step reaction: tyrosine is first activated by ATP to form Tyr-AMP and then transferred to the acceptor end of tRNA(Tyr). This is Tyrosine--tRNA ligase from Buchnera aphidicola subsp. Acyrthosiphon pisum (strain Tuc7).